Reading from the N-terminus, the 774-residue chain is Ion-translocating oxidoreductase complex subunit C (774 aa).

2 4Fe-4S ferredoxin-type domains span residues 359-389 (ELPEPVPAMPCIRCGDCAQVCPVSLLPQQLH) and 399-428 (QLLAHNLFDCIECGACAYVCPSSIPLVQYY). [4Fe-4S] cluster-binding residues include cysteine 369, cysteine 372, cysteine 375, cysteine 379, cysteine 408, cysteine 411, cysteine 414, and cysteine 418. Residues 453-490 (EQRQARLRRDEERRAAERAQRAEKAALARAAQAEREEA) are compositionally biased toward basic and acidic residues. The segment at 453–493 (EQRQARLRRDEERRAAERAQRAEKAALARAAQAEREEAAPA) is disordered.

The protein belongs to the 4Fe4S bacterial-type ferredoxin family. RnfC subfamily. The complex is composed of six subunits: RnfA, RnfB, RnfC, RnfD, RnfE and RnfG. Requires [4Fe-4S] cluster as cofactor.

The protein localises to the cell inner membrane. Its function is as follows. Part of a membrane-bound complex that couples electron transfer with translocation of ions across the membrane. The sequence is that of Ion-translocating oxidoreductase complex subunit C from Pseudomonas aeruginosa (strain ATCC 15692 / DSM 22644 / CIP 104116 / JCM 14847 / LMG 12228 / 1C / PRS 101 / PAO1).